A 328-amino-acid chain; its full sequence is Biotin synthase (328 aa).

Positions 49-273 (FNKEKIETCS…ICISRIIMPE (225 aa)) constitute a Radical SAM core domain. Residues C67, C71, and C74 each contribute to the [4Fe-4S] cluster site. [2Fe-2S] cluster-binding residues include S110, C142, C201, and R277.

Belongs to the radical SAM superfamily. Biotin synthase family. As to quaternary structure, homodimer. Requires [4Fe-4S] cluster as cofactor. It depends on [2Fe-2S] cluster as a cofactor.

It catalyses the reaction (4R,5S)-dethiobiotin + (sulfur carrier)-SH + 2 reduced [2Fe-2S]-[ferredoxin] + 2 S-adenosyl-L-methionine = (sulfur carrier)-H + biotin + 2 5'-deoxyadenosine + 2 L-methionine + 2 oxidized [2Fe-2S]-[ferredoxin]. It participates in cofactor biosynthesis; biotin biosynthesis; biotin from 7,8-diaminononanoate: step 2/2. Its function is as follows. Catalyzes the conversion of dethiobiotin (DTB) to biotin by the insertion of a sulfur atom into dethiobiotin via a radical-based mechanism. The sequence is that of Biotin synthase from Methanococcus vannielii (strain ATCC 35089 / DSM 1224 / JCM 13029 / OCM 148 / SB).